The sequence spans 317 residues: tRNA pseudouridine synthase B (317 aa).

The active-site Nucleophile is the D47.

It belongs to the pseudouridine synthase TruB family. Type 1 subfamily.

The enzyme catalyses uridine(55) in tRNA = pseudouridine(55) in tRNA. Responsible for synthesis of pseudouridine from uracil-55 in the psi GC loop of transfer RNAs. The polypeptide is tRNA pseudouridine synthase B (Shewanella sp. (strain MR-7)).